A 478-amino-acid polypeptide reads, in one-letter code: Kynureninase (478 aa).

Pyridoxal 5'-phosphate-binding positions include Leu150, Thr151, Phe178–Asp181, Ser234, Asp263, His266, and Tyr288. At Lys289 the chain carries N6-(pyridoxal phosphate)lysine. 2 residues coordinate pyridoxal 5'-phosphate: Trp318 and Asn346.

Belongs to the kynureninase family. In terms of assembly, homodimer. Requires pyridoxal 5'-phosphate as cofactor.

The protein resides in the cytoplasm. The catalysed reaction is L-kynurenine + H2O = anthranilate + L-alanine + H(+). It carries out the reaction 3-hydroxy-L-kynurenine + H2O = 3-hydroxyanthranilate + L-alanine + H(+). The protein operates within amino-acid degradation; L-kynurenine degradation; L-alanine and anthranilate from L-kynurenine: step 1/1. It participates in cofactor biosynthesis; NAD(+) biosynthesis; quinolinate from L-kynurenine: step 2/3. Functionally, catalyzes the cleavage of L-kynurenine (L-Kyn) and L-3-hydroxykynurenine (L-3OHKyn) into anthranilic acid (AA) and 3-hydroxyanthranilic acid (3-OHAA), respectively. In Caenorhabditis elegans, this protein is Kynureninase.